We begin with the raw amino-acid sequence, 135 residues long: Peptide methionine sulfoxide reductase MsrB (135 aa).

In terms of domain architecture, MsrB spans Asp9–Glu131. Residues Cys48, Cys51, Cys97, and Cys100 each coordinate Zn(2+). The Nucleophile role is filled by Cys120.

The protein belongs to the MsrB Met sulfoxide reductase family. The cofactor is Zn(2+).

It carries out the reaction L-methionyl-[protein] + [thioredoxin]-disulfide + H2O = L-methionyl-(R)-S-oxide-[protein] + [thioredoxin]-dithiol. The sequence is that of Peptide methionine sulfoxide reductase MsrB from Teredinibacter turnerae (strain ATCC 39867 / T7901).